The following is an 81-amino-acid chain: Ferredoxin (81 aa).

The 4Fe-4S ferredoxin-type domain occupies lysine 2–aspartate 30. Positions 11, 14, 17, and 61 each coordinate [4Fe-4S] cluster.

Requires [4Fe-4S] cluster as cofactor.

Functionally, ferredoxins are iron-sulfur proteins that transfer electrons in a wide variety of metabolic reactions. The chain is Ferredoxin (fer) from Geobacillus stearothermophilus (Bacillus stearothermophilus).